The chain runs to 140 residues: ATP synthase epsilon chain (140 aa).

It belongs to the ATPase epsilon chain family. As to quaternary structure, F-type ATPases have 2 components, CF(1) - the catalytic core - and CF(0) - the membrane proton channel. CF(1) has five subunits: alpha(3), beta(3), gamma(1), delta(1), epsilon(1). CF(0) has three main subunits: a, b and c.

It is found in the cell inner membrane. In terms of biological role, produces ATP from ADP in the presence of a proton gradient across the membrane. The polypeptide is ATP synthase epsilon chain (Pseudoalteromonas translucida (strain TAC 125)).